The primary structure comprises 348 residues: sn-glycerol-3-phosphate import ATP-binding protein UgpC (348 aa).

One can recognise an ABC transporter domain in the interval 4 to 235; the sequence is IQLSNIKKQY…PETTFVADFI (232 aa). Position 37 to 44 (37 to 44) interacts with ATP; the sequence is GPSGCGKS.

This sequence belongs to the ABC transporter superfamily. sn-glycerol-3-phosphate importer (TC 3.A.1.1.3) family. As to quaternary structure, the complex is composed of two ATP-binding proteins (UgpC), two transmembrane proteins (UgpA and UgpE) and a solute-binding protein (UgpB).

The protein localises to the cell inner membrane. It catalyses the reaction sn-glycerol 3-phosphate(out) + ATP + H2O = sn-glycerol 3-phosphate(in) + ADP + phosphate + H(+). In terms of biological role, part of the ABC transporter complex UgpBAEC involved in sn-glycerol-3-phosphate (G3P) import. Responsible for energy coupling to the transport system. The polypeptide is sn-glycerol-3-phosphate import ATP-binding protein UgpC (Bartonella quintana (strain Toulouse) (Rochalimaea quintana)).